An 89-amino-acid polypeptide reads, in one-letter code: MSERKAVIKNADMSEEMQEDAIHIAAGAIDKHDLEKDIAANIKKDFDRKYHPTWHCIVGRHFGSYVTHETHNFIYFYLDDRAFLLFKSG.

Belongs to the dynein light chain family. Tegument.

The protein localises to the cytoplasm. It localises to the cytoskeleton. Functionally, acts as a non-catalytic accessory component of a dynein complex. This Schistosoma mansoni (Blood fluke) protein is Dynein light chain (DLC).